A 440-amino-acid polypeptide reads, in one-letter code: Adenylosuccinate synthetase (440 aa).

Residues 12–18 (GDEGKGK) and 40–42 (GHT) contribute to the GTP site. Residue D13 is the Proton acceptor of the active site. Mg(2+) contacts are provided by D13 and G40. Residues 13–16 (DEGK), 38–41 (NAGH), T128, R142, Q223, T238, and R302 each bind IMP. H41 functions as the Proton donor in the catalytic mechanism. Residue 298 to 304 (TTTGRPR) participates in substrate binding. Residues R304, 330–332 (KLD), and 412–414 (SVG) each bind GTP.

The protein belongs to the adenylosuccinate synthetase family. As to quaternary structure, homodimer. Mg(2+) is required as a cofactor.

Its subcellular location is the cytoplasm. It catalyses the reaction IMP + L-aspartate + GTP = N(6)-(1,2-dicarboxyethyl)-AMP + GDP + phosphate + 2 H(+). Its pathway is purine metabolism; AMP biosynthesis via de novo pathway; AMP from IMP: step 1/2. Its function is as follows. Plays an important role in the de novo pathway of purine nucleotide biosynthesis. Catalyzes the first committed step in the biosynthesis of AMP from IMP. In Gloeobacter violaceus (strain ATCC 29082 / PCC 7421), this protein is Adenylosuccinate synthetase.